We begin with the raw amino-acid sequence, 172 residues long: Large ribosomal subunit protein uL10 (172 aa).

The protein belongs to the universal ribosomal protein uL10 family. As to quaternary structure, part of the ribosomal stalk of the 50S ribosomal subunit. The N-terminus interacts with L11 and the large rRNA to form the base of the stalk. The C-terminus forms an elongated spine to which L12 dimers bind in a sequential fashion forming a multimeric L10(L12)X complex.

In terms of biological role, forms part of the ribosomal stalk, playing a central role in the interaction of the ribosome with GTP-bound translation factors. The polypeptide is Large ribosomal subunit protein uL10 (Mesorhizobium japonicum (strain LMG 29417 / CECT 9101 / MAFF 303099) (Mesorhizobium loti (strain MAFF 303099))).